A 472-amino-acid polypeptide reads, in one-letter code: Pyruvate kinase (472 aa).

Residue Arg33 coordinates substrate. K(+)-binding residues include Asn35, Ser37, and Asp67. 35-38 (NFSH) contributes to the ATP binding site. Residues Arg74 and Lys155 each coordinate ATP. A Mg(2+)-binding site is contributed by Glu220. The substrate site is built by Gly243, Asp244, and Thr276. A Mg(2+)-binding site is contributed by Asp244.

It belongs to the pyruvate kinase family. Homotetramer. It depends on Mg(2+) as a cofactor. K(+) serves as cofactor.

The enzyme catalyses pyruvate + ATP = phosphoenolpyruvate + ADP + H(+). The protein operates within carbohydrate degradation; glycolysis; pyruvate from D-glyceraldehyde 3-phosphate: step 5/5. This is Pyruvate kinase (pyk) from Mycobacterium intracellulare.